The following is a 552-amino-acid chain: Dihydroxy-acid dehydratase (552 aa).

A Mg(2+)-binding site is contributed by D78. C119 contributes to the [2Fe-2S] cluster binding site. Positions 120 and 121 each coordinate Mg(2+). K121 bears the N6-carboxylysine mark. C191 contributes to the [2Fe-2S] cluster binding site. E442 is a binding site for Mg(2+). Catalysis depends on S468, which acts as the Proton acceptor.

This sequence belongs to the IlvD/Edd family. As to quaternary structure, homodimer. It depends on [2Fe-2S] cluster as a cofactor. The cofactor is Mg(2+).

The catalysed reaction is (2R)-2,3-dihydroxy-3-methylbutanoate = 3-methyl-2-oxobutanoate + H2O. The enzyme catalyses (2R,3R)-2,3-dihydroxy-3-methylpentanoate = (S)-3-methyl-2-oxopentanoate + H2O. It participates in amino-acid biosynthesis; L-isoleucine biosynthesis; L-isoleucine from 2-oxobutanoate: step 3/4. It functions in the pathway amino-acid biosynthesis; L-valine biosynthesis; L-valine from pyruvate: step 3/4. Functions in the biosynthesis of branched-chain amino acids. Catalyzes the dehydration of (2R,3R)-2,3-dihydroxy-3-methylpentanoate (2,3-dihydroxy-3-methylvalerate) into 2-oxo-3-methylpentanoate (2-oxo-3-methylvalerate) and of (2R)-2,3-dihydroxy-3-methylbutanoate (2,3-dihydroxyisovalerate) into 2-oxo-3-methylbutanoate (2-oxoisovalerate), the penultimate precursor to L-isoleucine and L-valine, respectively. The polypeptide is Dihydroxy-acid dehydratase (Clostridium botulinum (strain Alaska E43 / Type E3)).